Consider the following 97-residue polypeptide: Aspartyl/glutamyl-tRNA(Asn/Gln) amidotransferase subunit C (97 aa).

Belongs to the GatC family. As to quaternary structure, heterotrimer of A, B and C subunits.

The enzyme catalyses L-glutamyl-tRNA(Gln) + L-glutamine + ATP + H2O = L-glutaminyl-tRNA(Gln) + L-glutamate + ADP + phosphate + H(+). The catalysed reaction is L-aspartyl-tRNA(Asn) + L-glutamine + ATP + H2O = L-asparaginyl-tRNA(Asn) + L-glutamate + ADP + phosphate + 2 H(+). Functionally, allows the formation of correctly charged Asn-tRNA(Asn) or Gln-tRNA(Gln) through the transamidation of misacylated Asp-tRNA(Asn) or Glu-tRNA(Gln) in organisms which lack either or both of asparaginyl-tRNA or glutaminyl-tRNA synthetases. The reaction takes place in the presence of glutamine and ATP through an activated phospho-Asp-tRNA(Asn) or phospho-Glu-tRNA(Gln). The polypeptide is Aspartyl/glutamyl-tRNA(Asn/Gln) amidotransferase subunit C (Anaeromyxobacter dehalogenans (strain 2CP-C)).